The following is a 131-amino-acid chain: Small ribosomal subunit protein uS8 (131 aa).

Belongs to the universal ribosomal protein uS8 family. Part of the 30S ribosomal subunit. Contacts proteins S5 and S12.

Its function is as follows. One of the primary rRNA binding proteins, it binds directly to 16S rRNA central domain where it helps coordinate assembly of the platform of the 30S subunit. The polypeptide is Small ribosomal subunit protein uS8 (Pelagibacter ubique (strain HTCC1062)).